Consider the following 310-residue polypeptide: Methionyl-tRNA formyltransferase (310 aa).

Residue 111–114 (SLLP) coordinates (6S)-5,6,7,8-tetrahydrofolate.

The protein belongs to the Fmt family.

The catalysed reaction is L-methionyl-tRNA(fMet) + (6R)-10-formyltetrahydrofolate = N-formyl-L-methionyl-tRNA(fMet) + (6S)-5,6,7,8-tetrahydrofolate + H(+). Functionally, attaches a formyl group to the free amino group of methionyl-tRNA(fMet). The formyl group appears to play a dual role in the initiator identity of N-formylmethionyl-tRNA by promoting its recognition by IF2 and preventing the misappropriation of this tRNA by the elongation apparatus. In Nitrobacter hamburgensis (strain DSM 10229 / NCIMB 13809 / X14), this protein is Methionyl-tRNA formyltransferase.